We begin with the raw amino-acid sequence, 154 residues long: Aspartate carbamoyltransferase regulatory chain (154 aa).

Residues Cys-109, Cys-114, Cys-138, and Cys-141 each contribute to the Zn(2+) site.

Belongs to the PyrI family. As to quaternary structure, contains catalytic and regulatory chains. Requires Zn(2+) as cofactor.

Its function is as follows. Involved in allosteric regulation of aspartate carbamoyltransferase. This chain is Aspartate carbamoyltransferase regulatory chain, found in Methanothrix thermoacetophila (strain DSM 6194 / JCM 14653 / NBRC 101360 / PT) (Methanosaeta thermophila).